Consider the following 624-residue polypeptide: MQPEPRPSGAGAHTQFLPLRSQRPEGAGDTVMYASTECKAEVTPSQHGNRTFSYTLEDHTKQAFGIMNELRLSQQLCDVTLQVKYEDAPAAQFMAHKVVLASSSPVFKAMFTNGLREQGMEVVSIEGIHPKVMERLIEFAYTASISMGEKCVLHVMNGAVMYQIDSVVRACSDFLVQQLDPSNAIGIANFAEQIGCAELHQRAREYIYMHFGEVAKQEEFFNLSHCQLVTLISRDDLNVRCESEVFHACINWVKYDCEQRRFYVQALLRAVRCHSLTPHFLQMQLQKCEILQSDSRCKDYLVKIFQELTLHKPTQVMPCRAPKVGRLIYTAGGYFRQSLSYLEAYNPSDGTWLRLADLQVPRSGLAGCVVGGLLYAVGGRNNSPDGNTDSSALDCYNPMTNQWSPCAPMSVPRNRIGVGVIDGHIYAVGGSHGCIHHNSVERYEPERDEWHLVAPMLTRRIGVGVAVLNRLLYAVGGFDGTNRLNSAECYYPERNEWRMITPMNTIRSGAGVCVLHNCIYAAGGYDGQDQLNSVERYDVETETWTFVAPMKHRRSALGITVHQGRIYVLGGYDGHTFLDSVECYDPDTDTWSEVTRMTSGRSGVGVAVTMEPCRKQIDQQNCTC.

Residues 1–27 (MQPEPRPSGAGAHTQFLPLRSQRPEGA) form a disordered region. Cysteine 38 bears the S-(2-succinyl)cysteine mark. The BTB domain maps to 77 to 149 (CDVTLQVKYE…AYTASISMGE (73 aa)). Arginine 135 participates in a covalent cross-link: N5-[4-(S-L-cysteinyl)-5-methyl-1H-imidazol-2-yl]-L-ornithine (Arg-Cys) (interchain with C-151 in KEAP1). Cysteine 151 and cysteine 241 each carry S-(2-succinyl)cysteine. Cysteine 151 is modified (S-(2,3-dicarboxypropyl)cysteine; alternate). An S-nitrosocysteine; alternate modification is found at cysteine 151. Cysteine 151 participates in a covalent cross-link: N5-[4-(S-L-cysteinyl)-5-methyl-1H-imidazol-2-yl]-L-ornithine (Cys-Arg) (interchain with R-135 in KEAP1). One can recognise a BACK domain in the interval 184–286 (AIGIANFAEQ…TPHFLQMQLQ (103 aa)). 2 positions are modified to S-(2,3-dicarboxypropyl)cysteine: cysteine 257 and cysteine 273. S-(2-succinyl)cysteine is present on residues cysteine 288 and cysteine 319. Cysteine 288 bears the S-(2,3-dicarboxypropyl)cysteine; alternate mark. 6 Kelch repeats span residues 327–372 (LIYT…VVGG), 373–423 (LLYA…VIDG), 424–470 (HIYA…VLNR), 471–517 (LLYA…VLHN), 519–564 (IYAA…VHQG), and 565–611 (RIYV…VTME). Cysteine 434 carries the S-cGMP-cysteine modification. S-(2-succinyl)cysteine is present on cysteine 613.

The protein belongs to the KEAP1 family. Component of the BCR(KEAP1) E3 ubiquitin ligase complex, at least composed of 2 molecules of CUL3, 2 molecules of KEAP1, and RBX1. Interacts with NFE2L2/NRF2; the interaction is direct. Forms a ternary complex with NFE2L2/NRF2 and PGAM5. Interacts with (phosphorylated) SQSTM1/p62; the interaction is direct and inactivates the BCR(KEAP1) complex by sequestering it in inclusion bodies, promoting its degradation. Interacts with NFE2L1. Interacts with BPTF and PTMA. Interacts with MAP1LC3B. Interacts indirectly with ENC1. Interacts with SESN1 and SESN2. Interacts with HSP90AA1 and HSP90AB1. Interacts with PGCKA1; this interaction prevents the ubiquitination of KEAP1 by TRIM25, thus protecting KEAP1 protein from degradation. Post-translationally, non-enzymatic covalent modifications of reactive cysteines by electrophile metabolites inactivate the BCR(KEAP1) complex. Accumulation of fumarate promotes the formation of cysteine S-succination (S-(2-succinyl)cysteine), leading to inactivate the BCR(KEAP1) complex and promote NFE2L2/NRF2 nuclear accumulation and activation. Nitric oxide-dependent 8-Nitro-cGMP formation promotes cysteine guanylation (S-cGMP-cysteine), leading to NFE2L2/NRF2 nuclear accumulation and activation. Itaconate, an anti-inflammatory metabolite generated in response to lipopolysaccharide, alkylates cysteines, activating NFE2L2/NRF2. Methylglyoxal, a reactive metabolite that accumulates when the glycolytic enzyme PGK1 is inhibited, promotes formation of a methylimidazole cross-link between proximal Cys-151 and Arg-135 on another KEAP1 molecule, resulting in an inactive dimer that inactivates the BCR(KEAP1) complex. Degraded via a proteasomal-independent process during selective autophagy: interaction with phosphorylated SQSTM1/p62 sequesters KEAP1 in inclusion bodies, leading to its degradation. In terms of processing, auto-ubiquitinated by the BCR(KEAP1) complex. Quinone-induced oxidative stress, but not sulforaphane, increases its ubiquitination. Ubiquitination and subsequent degradation is most pronounced following prolonged exposure of cells to oxidative stress, particularly in glutathione-deficient cells that are highly susceptible to oxidative stress. Deubiquitinated by USP25; leading to stabilization. Ubiquitinated by TRIM25; leading to degradation upon ER stress.

Its subcellular location is the cytoplasm. It localises to the nucleus. Its pathway is protein modification; protein ubiquitination. With respect to regulation, ubiquitin ligase activity of the BCR(KEAP1) complex is inhibited by oxidative stress and electrophile metabolites such as sulforaphane. Electrophile metabolites react with reactive cysteine residues in KEAP1 and trigger non-enzymatic covalent modifications of these cysteine residues, leading to inactivate the ubiquitin ligase activity of the BCR(KEAP1) complex. Selective autophagy also inactivates the BCR(KEAP1) complex via interaction between KEAP1 and SQSTM1/p62, which sequesters the complex in inclusion bodies and promotes its degradation. In terms of biological role, substrate-specific adapter of a BCR (BTB-CUL3-RBX1) E3 ubiquitin ligase complex that regulates the response to oxidative stress by targeting NFE2L2/NRF2 for ubiquitination. KEAP1 acts as a key sensor of oxidative and electrophilic stress: in normal conditions, the BCR(KEAP1) complex mediates ubiquitination and degradation of NFE2L2/NRF2, a transcription factor regulating expression of many cytoprotective genes. In response to oxidative stress, different electrophile metabolites trigger non-enzymatic covalent modifications of highly reactive cysteine residues in KEAP1, leading to inactivate the ubiquitin ligase activity of the BCR(KEAP1) complex, promoting NFE2L2/NRF2 nuclear accumulation and expression of phase II detoxifying enzymes. In response to selective autophagy, KEAP1 is sequestered in inclusion bodies following its interaction with SQSTM1/p62, leading to inactivation of the BCR(KEAP1) complex and activation of NFE2L2/NRF2. The BCR(KEAP1) complex also mediates ubiquitination of SQSTM1/p62, increasing SQSTM1/p62 sequestering activity and degradation. The BCR(KEAP1) complex also targets BPTF and PGAM5 for ubiquitination and degradation by the proteasome. This Sus scrofa (Pig) protein is Kelch-like ECH-associated protein 1.